The following is a 301-amino-acid chain: NADH-cytochrome b5 reductase 3 (301 aa).

Residue glycine 2 is the site of N-myristoyl glycine attachment. The FAD-binding FR-type domain maps to 40–152 (DIKYPLRLID…RGPNGLLVYQ (113 aa)). At lysine 42 the chain carries N6-acetyllysine. Tyrosine 43 is subject to Phosphotyrosine. The residue at position 50 (lysine 50) is an N6-acetyllysine. Positions 92, 93, 94, 109, 111, and 114 each coordinate FAD. Residue lysine 120 is modified to N6-acetyllysine. 4 residues coordinate FAD: lysine 126, methionine 127, serine 128, and threonine 185.

The protein belongs to the flavoprotein pyridine nucleotide cytochrome reductase family. In terms of assembly, component of a complex composed of cytochrome b5, NADH-cytochrome b5 reductase (CYB5R3) and MTARC2. Interacts with MTLN; the interaction is required to maintain cellular lipid composition and leads to stimulation of mitochondrial respiratory complex I activity. FAD is required as a cofactor.

It localises to the endoplasmic reticulum membrane. The protein localises to the mitochondrion outer membrane. The enzyme catalyses 2 Fe(III)-[cytochrome b5] + NADH = 2 Fe(II)-[cytochrome b5] + NAD(+) + H(+). Catalyzes the reduction of two molecules of cytochrome b5 using NADH as the electron donor. The polypeptide is NADH-cytochrome b5 reductase 3 (CYB5R3) (Bos taurus (Bovine)).